The primary structure comprises 163 residues: Nucleotide-binding protein YajQ (163 aa).

It belongs to the YajQ family.

Nucleotide-binding protein. The protein is Nucleotide-binding protein YajQ of Salmonella agona (strain SL483).